Here is a 327-residue protein sequence, read N- to C-terminus: Phenylalanine--tRNA ligase alpha subunit (327 aa).

Residue E252 coordinates Mg(2+).

The protein belongs to the class-II aminoacyl-tRNA synthetase family. Phe-tRNA synthetase alpha subunit type 1 subfamily. In terms of assembly, tetramer of two alpha and two beta subunits. Mg(2+) is required as a cofactor.

The protein resides in the cytoplasm. It carries out the reaction tRNA(Phe) + L-phenylalanine + ATP = L-phenylalanyl-tRNA(Phe) + AMP + diphosphate + H(+). The sequence is that of Phenylalanine--tRNA ligase alpha subunit from Shewanella sp. (strain MR-7).